We begin with the raw amino-acid sequence, 126 residues long: Glycine cleavage system H protein (126 aa).

The Lipoyl-binding domain occupies Asp19–Glu100. At Lys60 the chain carries N6-lipoyllysine.

Belongs to the GcvH family. The glycine cleavage system is composed of four proteins: P, T, L and H. (R)-lipoate serves as cofactor.

Functionally, the glycine cleavage system catalyzes the degradation of glycine. The H protein shuttles the methylamine group of glycine from the P protein to the T protein. The polypeptide is Glycine cleavage system H protein (Koribacter versatilis (strain Ellin345)).